Reading from the N-terminus, the 92-residue chain is Small ribosomal subunit protein bS18A (92 aa).

The protein belongs to the bacterial ribosomal protein bS18 family. As to quaternary structure, part of the 30S ribosomal subunit. Forms a tight heterodimer with protein bS6.

Its function is as follows. Binds as a heterodimer with protein bS6 to the central domain of the 16S rRNA, where it helps stabilize the platform of the 30S subunit. In Cupriavidus pinatubonensis (strain JMP 134 / LMG 1197) (Cupriavidus necator (strain JMP 134)), this protein is Small ribosomal subunit protein bS18A.